Consider the following 249-residue polypeptide: 5-oxoprolinase subunit A (249 aa).

This sequence belongs to the LamB/PxpA family. As to quaternary structure, forms a complex composed of PxpA, PxpB and PxpC.

The enzyme catalyses 5-oxo-L-proline + ATP + 2 H2O = L-glutamate + ADP + phosphate + H(+). Functionally, catalyzes the cleavage of 5-oxoproline to form L-glutamate coupled to the hydrolysis of ATP to ADP and inorganic phosphate. This Limosilactobacillus fermentum (strain NBRC 3956 / LMG 18251) (Lactobacillus fermentum) protein is 5-oxoprolinase subunit A.